Here is a 226-residue protein sequence, read N- to C-terminus: uncharacterized protein (226 aa).

It to L.innocua lin2408 and lin2600.

This is an uncharacterized protein from Listeria innocua serovar 6a (strain ATCC BAA-680 / CLIP 11262).